Consider the following 94-residue polypeptide: DNA-directed RNA polymerase subunit Rpo11 (94 aa).

The protein belongs to the archaeal Rpo11/eukaryotic RPB11/RPC19 RNA polymerase subunit family. In terms of assembly, part of the RNA polymerase complex.

It localises to the cytoplasm. It catalyses the reaction RNA(n) + a ribonucleoside 5'-triphosphate = RNA(n+1) + diphosphate. In terms of biological role, DNA-dependent RNA polymerase (RNAP) catalyzes the transcription of DNA into RNA using the four ribonucleoside triphosphates as substrates. This is DNA-directed RNA polymerase subunit Rpo11 from Thermococcus kodakarensis (strain ATCC BAA-918 / JCM 12380 / KOD1) (Pyrococcus kodakaraensis (strain KOD1)).